The chain runs to 426 residues: DNA primase DnaG (426 aa).

Positions 165–241 constitute a Toprim domain; the sequence is DEIIIVEGRA…DIDYVAKAPP (77 aa). Residues glutamate 171, aspartate 215, and aspartate 217 each contribute to the Mg(2+) site. The tract at residues 278–298 is disordered; it reads PAVEERPQPPQPQPPAVQPVQ. Positions 285 to 294 are enriched in pro residues; the sequence is QPPQPQPPAV.

It belongs to the archaeal DnaG primase family. As to quaternary structure, forms a ternary complex with MCM helicase and DNA. Component of the archaeal exosome complex. The cofactor is Mg(2+).

It catalyses the reaction ssDNA + n NTP = ssDNA/pppN(pN)n-1 hybrid + (n-1) diphosphate.. In terms of biological role, RNA polymerase that catalyzes the synthesis of short RNA molecules used as primers for DNA polymerase during DNA replication. Also part of the exosome, which is a complex involved in RNA degradation. Acts as a poly(A)-binding protein that enhances the interaction between heteromeric, adenine-rich transcripts and the exosome. The sequence is that of DNA primase DnaG from Hyperthermus butylicus (strain DSM 5456 / JCM 9403 / PLM1-5).